Consider the following 506-residue polypeptide: Anaerobic nitric oxide reductase transcription regulator NorR (506 aa).

Asp-57 is subject to 4-aspartylphosphate. Residues 187-416 (MIGLSPAMTQ…LEHAIHRAVV (230 aa)) enclose the Sigma-54 factor interaction domain. ATP is bound by residues 215-222 (GETGTGKE) and 278-287 (ADNGTLFLDE). Positions 481–500 (WAASARALETDVANLHRLAK) form a DNA-binding region, H-T-H motif.

It functions in the pathway nitrogen metabolism; nitric oxide reduction. In terms of biological role, required for the expression of anaerobic nitric oxide (NO) reductase, acts as a transcriptional activator for at least the norVW operon. Activation also requires sigma-54. The chain is Anaerobic nitric oxide reductase transcription regulator NorR from Salmonella choleraesuis (strain SC-B67).